Reading from the N-terminus, the 1461-residue chain is Autotransporter adhesin SadA (1461 aa).

An N-terminal signal peptide occupies residues 1 to 54; sequence MNRIFKVLWNAATGTFVVTSETAKSRGKKNGRRKLAVSALIGLSSIMVSADALA. The tract at residues 55–1372 is surface exposed passenger domain; it reads NAGNDTGDGV…EEANTYTDQK (1318 aa). The tract at residues 1373–1461 is translocator domain; the sequence is MGEMNSKIKG…SAAIGAGFQW (89 aa). Beta stranded transmembrane passes span 1407-1417, 1421-1431, 1440-1446, and 1450-1461; these read GANMTSIAGGT, ESAVAIGVSMV, KLQGTSN, and DYSAAIGAGFQW.

The protein belongs to the autotransporter-2 (AT-2) (TC 1.B.40) family. As to quaternary structure, homotrimer.

It localises to the cell surface. The protein resides in the cell outer membrane. Its function is as follows. Involved in cell aggregation, biofilm formation, and adhesion to human intestinal epithelial cells. The polypeptide is Autotransporter adhesin SadA (Salmonella typhimurium (strain LT2 / SGSC1412 / ATCC 700720)).